The chain runs to 687 residues: Pre-mRNA-splicing factor CLF1 (687 aa).

HAT repeat units follow at residues 45–77 (EYQRRKRTEYEGYLKRNRLDMGQWIRYAQFEIE), 79–111 (HDMRRARSIFERALLVDSSFIPLWIRYIDAELK), 113–145 (KCINHARNLMNRAISTLPRVDKLWYKYLIVEES), 147–178 (NNVEIVRSLYTKWCSLEPGVNAWNSFVDFEIR), 180–211 (KNWNGVREIYSKYVMAHPQMQTWLKWVRFENR), 213–247 (GNTEFTRSVYSLAIDTVANLQNLQIWSDMEVAKLV), 251–283 (AHWEAAQQEYERSSALYQIAIEKWPSNQLLKAG), 300–332 (TISYKRKMEYETILSNNAYDYDTWWLYLDLISE), 337–369 (QIMQTFEKAIVDSRPKELSKNVQWKRYIYLWMR), 383–416 (LEEELFQRLIDDIIPHKHFTFSKIWLMYAKFLIR), 451–483 (KEFDRVRKIYEKFIEFQPSDLQIWSQYGELEEN), 525–557 (QEFEKARKLYRRYLELNQYSPQSWIEFAMYQTS), and 629–661 (LDQETVKKRFPKVIKKVRLQNGVEEEFVDYIFP).

Belongs to the crooked-neck family. As to quaternary structure, belongs to the NTC complex (or PRP19-associated complex), composed of at least CEF1, CLF1, ISY1, NTC20, SNT309, SYF1, SYF2, and PRP19. The NTC complex associates with the spliceosome after the release of the U1 and U4 snRNAs and forms the CWC spliceosome subcomplex (or CEF1-associated complex) reminiscent of a late-stage spliceosome composed also of the U2, U5 and U6 snRNAs and at least BUD13, BUD31, BRR2, CDC40, CUS1, CWC2, CWC15, CWC21, CWC22, CWC23, CWC24, CWC25, CWC27, ECM2, HSH155, IST3, LEA1, MSL1, PRP8, PRP9, PRP11, PRP21, PRP22, PRP45, PRP46, SLU7, SMB1, SMD1, SMD2, SMD3, SMX2, SMX3, SNU114, SPP2, RSE1 and YJU2. Interacts with CEF1, ISY1, MUD2, NTC20, PRP22, PRP40, PRP46, SYF1, SYF2, and the ORC2 subunit of the origin recognition complex.

It localises to the nucleus. Functionally, involved in pre-mRNA splicing and cell cycle progression. Required for the spliceosome assembly by promoting the functional integration of the U4/U6.U5 tri-snRNP particle into the U1-, U2-dependent pre-spliceosome. Also recruits PRP19 to the spliceosome, as a component of the NTC complex (or PRP19-associated complex). The association of the NTC complex to the spliceosome mediates conformational rearrangement or stabilizes the structure of the spliceosome after U4 snRNA dissociation, which leads to spliceosome maturation. Required for initiation of the DNA replication by binding the RNA replication origins, probably through its interaction with the origin recognition complex (ORC). The protein is Pre-mRNA-splicing factor CLF1 (CLF1) of Saccharomyces cerevisiae (strain ATCC 204508 / S288c) (Baker's yeast).